We begin with the raw amino-acid sequence, 461 residues long: Argininosuccinate lyase (461 aa).

Belongs to the lyase 1 family. Argininosuccinate lyase subfamily. In terms of assembly, homotetramer.

The protein localises to the cytoplasm. The catalysed reaction is 2-(N(omega)-L-arginino)succinate = fumarate + L-arginine. The protein operates within amino-acid biosynthesis; L-arginine biosynthesis; L-arginine from L-ornithine and carbamoyl phosphate: step 3/3. In Nostoc punctiforme (strain ATCC 29133 / PCC 73102), this protein is Argininosuccinate lyase.